The sequence spans 962 residues: Integrator complex subunit 7 (962 aa).

A phosphoserine mark is found at Ser-338 and Ser-809.

It belongs to the Integrator subunit 7 family. Component of the Integrator complex, composed of core subunits INTS1, INTS2, INTS3, INTS4, INTS5, INTS6, INTS7, INTS8, INTS9/RC74, INTS10, INTS11/CPSF3L, INTS12, INTS13, INTS14 and INTS15. The core complex associates with protein phosphatase 2A subunits PPP2CA and PPP2R1A, to form the Integrator-PP2A (INTAC) complex. Interacts with NABP2.

It localises to the nucleus. It is found in the chromosome. The protein localises to the cytoplasm. Functionally, component of the integrator complex, a multiprotein complex that terminates RNA polymerase II (Pol II) transcription in the promoter-proximal region of genes. The integrator complex provides a quality checkpoint during transcription elongation by driving premature transcription termination of transcripts that are unfavorably configured for transcriptional elongation: the complex terminates transcription by (1) catalyzing dephosphorylation of the C-terminal domain (CTD) of Pol II subunit POLR2A/RPB1 and SUPT5H/SPT5, (2) degrading the exiting nascent RNA transcript via endonuclease activity and (3) promoting the release of Pol II from bound DNA. The integrator complex is also involved in terminating the synthesis of non-coding Pol II transcripts, such as enhancer RNAs (eRNAs), small nuclear RNAs (snRNAs), telomerase RNAs and long non-coding RNAs (lncRNAs). May be not involved in the recruitment of cytoplasmic dynein to the nuclear envelope by different components of the INT complex. Plays a role in DNA damage response (DDR) signaling during the S phase. This chain is Integrator complex subunit 7, found in Homo sapiens (Human).